Consider the following 243-residue polypeptide: Venom peptide isomerase heavy chain (243 aa).

Residues 1–243 (IVGGKTAKFG…YTNWMSKNMV (243 aa)) enclose the Peptidase S1 domain. Cys31 and Cys47 are joined by a disulfide. Catalysis depends on charge relay system residues His46 and Asp96. A glycan (N-linked (GlcNAc...) asparagine) is linked at Asn127. 2 disulfide bridges follow: Cys159/Cys181 and Cys190/Cys219. The active-site Charge relay system is Ser194.

This sequence belongs to the peptidase S1 family. As to quaternary structure, heterodimer with venom peptide isomerase light chain; disulfide-linked. In terms of processing, N-linked glycan at Asn-127 consists of Man3-GlcNAc2-Fuc. Expressed by the venom gland.

It localises to the secreted. In terms of biological role, peptide isomerase that inverts the chirality at the Ser-81 of omega-Aga IVB. Acts cofactor-independently. The chain is Venom peptide isomerase heavy chain from Agelenopsis aperta (North American funnel-web spider).